A 521-amino-acid polypeptide reads, in one-letter code: Glutamate--tRNA ligase (521 aa).

A 'HIGH' region motif is present at residues 13-23; sequence PSPSGFLHVGG. A 'KMSKS' region motif is present at residues 253–257; it reads KLSKR. Lys256 is a binding site for ATP.

It belongs to the class-I aminoacyl-tRNA synthetase family. Glutamate--tRNA ligase type 1 subfamily. Monomer.

It is found in the cytoplasm. It catalyses the reaction tRNA(Glu) + L-glutamate + ATP = L-glutamyl-tRNA(Glu) + AMP + diphosphate. In terms of biological role, catalyzes the attachment of glutamate to tRNA(Glu) in a two-step reaction: glutamate is first activated by ATP to form Glu-AMP and then transferred to the acceptor end of tRNA(Glu). The chain is Glutamate--tRNA ligase from Leptospira interrogans serogroup Icterohaemorrhagiae serovar copenhageni (strain Fiocruz L1-130).